Consider the following 198-residue polypeptide: MPFDLKAFKSDIVFYIDNYERLEDLLNEIDNKMEKIKHFFNGREKVLLKLENLEEKISDIPKIMAKIKEYRIKIKAIITDEYDEKAPTVRKEKDEEKTVIYLKNLRSGQKISHNGNIILVGNVNAGSEINAGGTVVIFGSCNGIVRAGLKNPHSYILTLSINTPLLQISDVKHQLNKQYNNPVFVYQKGGKLMFKEII.

The protein belongs to the MinC family. Interacts with MinD and FtsZ.

In terms of biological role, cell division inhibitor that blocks the formation of polar Z ring septums. Rapidly oscillates between the poles of the cell to destabilize FtsZ filaments that have formed before they mature into polar Z rings. Prevents FtsZ polymerization. The chain is Probable septum site-determining protein MinC from Thermosipho melanesiensis (strain DSM 12029 / CIP 104789 / BI429).